Here is a 291-residue protein sequence, read N- to C-terminus: N-acetylmannosamine kinase (291 aa).

ATP-binding positions include 5 to 12 (AIDIGGTK) and 132 to 139 (GVGGGVVS). His-156, Cys-166, Cys-168, and Cys-173 together coordinate Zn(2+).

The protein belongs to the ROK (NagC/XylR) family. NanK subfamily. As to quaternary structure, homodimer.

The enzyme catalyses an N-acyl-D-mannosamine + ATP = an N-acyl-D-mannosamine 6-phosphate + ADP + H(+). The protein operates within amino-sugar metabolism; N-acetylneuraminate degradation; D-fructose 6-phosphate from N-acetylneuraminate: step 2/5. In terms of biological role, catalyzes the phosphorylation of N-acetylmannosamine (ManNAc) to ManNAc-6-P. The sequence is that of N-acetylmannosamine kinase from Escherichia coli O157:H7.